We begin with the raw amino-acid sequence, 154 residues long: Putative pre-16S rRNA nuclease (154 aa).

Belongs to the YqgF nuclease family.

The protein resides in the cytoplasm. In terms of biological role, could be a nuclease involved in processing of the 5'-end of pre-16S rRNA. This chain is Putative pre-16S rRNA nuclease, found in Rickettsia peacockii (strain Rustic).